Reading from the N-terminus, the 262-residue chain is Cytochrome c oxidase subunit 3 (262 aa).

The next 7 membrane-spanning stretches (helical) occupy residues Pro16–Phe36, Ser39–Trp59, Gly83–Phe103, Phe128–Ala148, Ala160–Met180, Phe198–Val218, and Trp241–Gly261.

This sequence belongs to the cytochrome c oxidase subunit 3 family. As to quaternary structure, component of the cytochrome c oxidase (complex IV, CIV), a multisubunit enzyme composed of a catalytic core of 3 subunits and several supernumerary subunits. The complex exists as a monomer or a dimer and forms supercomplexes (SCs) in the inner mitochondrial membrane with ubiquinol-cytochrome c oxidoreductase (cytochrome b-c1 complex, complex III, CIII).

The protein localises to the mitochondrion inner membrane. It catalyses the reaction 4 Fe(II)-[cytochrome c] + O2 + 8 H(+)(in) = 4 Fe(III)-[cytochrome c] + 2 H2O + 4 H(+)(out). Functionally, component of the cytochrome c oxidase, the last enzyme in the mitochondrial electron transport chain which drives oxidative phosphorylation. The respiratory chain contains 3 multisubunit complexes succinate dehydrogenase (complex II, CII), ubiquinol-cytochrome c oxidoreductase (cytochrome b-c1 complex, complex III, CIII) and cytochrome c oxidase (complex IV, CIV), that cooperate to transfer electrons derived from NADH and succinate to molecular oxygen, creating an electrochemical gradient over the inner membrane that drives transmembrane transport and the ATP synthase. Cytochrome c oxidase is the component of the respiratory chain that catalyzes the reduction of oxygen to water. Electrons originating from reduced cytochrome c in the intermembrane space (IMS) are transferred via the dinuclear copper A center (CU(A)) of subunit 2 and heme A of subunit 1 to the active site in subunit 1, a binuclear center (BNC) formed by heme A3 and copper B (CU(B)). The BNC reduces molecular oxygen to 2 water molecules using 4 electrons from cytochrome c in the IMS and 4 protons from the mitochondrial matrix. This is Cytochrome c oxidase subunit 3 (COIII) from Metridium senile (Brown sea anemone).